We begin with the raw amino-acid sequence, 44 residues long: U4-ctenitoxin-Pk1a (44 aa).

5 cysteine pairs are disulfide-bonded: Cys4–Cys18, Cys11–Cys24, Cys15–Cys42, Cys17–Cys33, and Cys26–Cys31.

In terms of tissue distribution, expressed by the venom gland.

It is found in the secreted. Neurotoxin. Causes spastic paralysis and death in mice within 10 minutes at dose levels of 3 ug per mouse. The protein is U4-ctenitoxin-Pk1a of Phoneutria keyserlingi (Brazilian wandering spider).